Consider the following 315-residue polypeptide: Methionyl-tRNA formyltransferase (315 aa).

(6S)-5,6,7,8-tetrahydrofolate is bound at residue 113 to 116 (SLLP).

This sequence belongs to the Fmt family.

The enzyme catalyses L-methionyl-tRNA(fMet) + (6R)-10-formyltetrahydrofolate = N-formyl-L-methionyl-tRNA(fMet) + (6S)-5,6,7,8-tetrahydrofolate + H(+). Its function is as follows. Attaches a formyl group to the free amino group of methionyl-tRNA(fMet). The formyl group appears to play a dual role in the initiator identity of N-formylmethionyl-tRNA by promoting its recognition by IF2 and preventing the misappropriation of this tRNA by the elongation apparatus. The protein is Methionyl-tRNA formyltransferase of Salmonella dublin (strain CT_02021853).